The primary structure comprises 87 residues: Small ribosomal subunit protein uS17 (87 aa).

It belongs to the universal ribosomal protein uS17 family. In terms of assembly, part of the 30S ribosomal subunit.

In terms of biological role, one of the primary rRNA binding proteins, it binds specifically to the 5'-end of 16S ribosomal RNA. The chain is Small ribosomal subunit protein uS17 from Exiguobacterium sibiricum (strain DSM 17290 / CCUG 55495 / CIP 109462 / JCM 13490 / 255-15).